Consider the following 308-residue polypeptide: Isoaspartyl peptidase/L-asparaginase (308 aa).

Methionine 1 is subject to N-acetylmethionine. The Nucleophile role is filled by threonine 168. Substrate is bound by residues 196 to 199 (RVGD) and 219 to 222 (TGHG).

The protein belongs to the Ntn-hydrolase family. Heterodimer of an alpha and beta chain produced by autocleavage. This heterodimer may then dimerize in turn, giving rise to a heterotetramer. In terms of processing, cleaved into an alpha and beta chain by autocatalysis; this activates the enzyme. The N-terminal residue of the beta subunit is responsible for the nucleophile hydrolase activity.

It localises to the cytoplasm. It carries out the reaction L-asparagine + H2O = L-aspartate + NH4(+). The enzyme catalyses Cleavage of a beta-linked Asp residue from the N-terminus of a polypeptide.. Has both L-asparaginase and beta-aspartyl peptidase activity. May be involved in the production of L-aspartate, which can act as an excitatory neurotransmitter in some brain regions. Is highly active with L-Asp beta-methyl ester. Besides, has catalytic activity toward beta-aspartyl dipeptides and their methyl esters, including beta-L-Asp-L-Phe, beta-L-Asp-L-Phe methyl ester (aspartame), beta-L-Asp-L-Ala, beta-L-Asp-L-Leu and beta-L-Asp-L-Lys. Does not have aspartylglucosaminidase activity and is inactive toward GlcNAc-L-Asn. Likewise, has no activity toward glutamine. The sequence is that of Isoaspartyl peptidase/L-asparaginase (ASRGL1) from Macaca fascicularis (Crab-eating macaque).